A 157-amino-acid polypeptide reads, in one-letter code: MQITIKDLQDLLSSVQRKKIQTLKLKKNKFELILNKPSKKVPQEVVSLKSSHIFKSIHSETINIPPKKTESINSKPSTNYATIVSPMVGTFYHSPAPGEKIFVQVGDIVKCNQTVCIIEAMKLMNEIEAEIEGIIIEILVKNGDIVDCGQALMKVET.

Positions 80-156 constitute a Biotinyl-binding domain; the sequence is YATIVSPMVG…DCGQALMKVE (77 aa). Lysine 122 bears the N6-biotinyllysine mark.

It localises to the plastid. It is found in the chloroplast. It functions in the pathway lipid metabolism; fatty acid biosynthesis. Functionally, this protein is a component of the acetyl coenzyme A carboxylase complex; first, biotin carboxylase catalyzes the carboxylation of the carrier protein and then the transcarboxylase transfers the carboxyl group to form malonyl-CoA. In Porphyra purpurea (Red seaweed), this protein is Biotin carboxyl carrier protein of acetyl-CoA carboxylase (accB).